A 962-amino-acid polypeptide reads, in one-letter code: MSNTTVEQFAAELKRPVEDLLKQLKEAGVSKNSGSDSLTLDDKQLLNAYLTKKNGSNSSTISIRRTKTEVSTVDGVKVETRKRGRTVKIPSAEELAAQVKAAQTQAAPVRPEQTAEDAAKARAEAAARAEARAKAEAEAAKLKAAKAGNKAKPAAQKPTEAKAETAPVAAETKPAEESKAEKAQADKMPSEKPAEPKEKAAKPKHERNGKGKDAKKPAKPAAPAVPQPVVSAEEQAQRDEEARRAAALRAHQEALLKEKQERQARREAMKQQAEQQAKAAQEAKTGRQRPAKPAEKPQAAAPAVENKPVNPAKAKKEDRRNRDDEGQGRNAKGKGGKGGRDRNNARNGDDERVRGGKKGKKLKLEPNQHAFQAPTEPVVHEVLVPETITVADLAHKMAVKGVEVVKALMKMGMMVTINQSIDQDTALIVVEELGHIGKPAAADDPEAFLDEGAEAVEAEALPRPPVVTVMGHVDHGKTSLLDYIRRTKVVQGEAGGITQHIGAYHVETPRGVITFLDTPGHEAFTAMRARGAKATDIVILVVAADDGVMPQTIEAIAHAKAAGVPMVVAVNKIDKEAANPERIRQELTAHEVVPDEWGGDVQFIDVSAKKGLNIDALLEAVLLEAEVLELTAPVDAPAKGIIVEARLDKGRGAVATLLVQSGTLKKGDMLLAGTAFGKIRAMVDENGKSITEAGPSIPVEILGLSDVPNAGEDAMVLADEKKAREIALFRQGKYRDVRLAKQQAAKLENMFNNMGETQAQSLSVIIKADVQGSYEALAGSLKKLSTDEVKVNVLHSGVGGITESDVNLAIASGAFIIGFNVRADASSRKLAENENVEIRYYNIIYDAINDVKAAMSGMLSPEEKEQVTGTVEIRQVISVSKVGNIAGCMVTDGVVKRDSHVRLIRNNVVIHTGELASLKRYKDDVKEVRMGFECGLMLKGYNEIMEGDQLECFDIVEVARSL.

The segment at 99–366 (VKAAQTQAAP…KKGKKLKLEP (268 aa)) is disordered. Residues 117 to 141 (DAAKARAEAAARAEARAKAEAEAAK) are compositionally biased toward basic and acidic residues. The segment covering 145–155 (AKAGNKAKPAA) has biased composition (low complexity). The segment covering 173–216 (KPAEESKAEKAQADKMPSEKPAEPKEKAAKPKHERNGKGKDAKK) has biased composition (basic and acidic residues). Over residues 219-234 (KPAAPAVPQPVVSAEE) the composition is skewed to low complexity. Basic and acidic residues predominate over residues 235-269 (QAQRDEEARRAAALRAHQEALLKEKQERQARREAM). The segment covering 270–283 (KQQAEQQAKAAQEA) has biased composition (low complexity). Composition is skewed to basic and acidic residues over residues 314-327 (AKKE…DEGQ) and 338-354 (GGRD…ERVR). One can recognise a tr-type G domain in the interval 462–631 (PRPPVVTVMG…LLEAEVLELT (170 aa)). The segment at 471–478 (GHVDHGKT) is G1. 471–478 (GHVDHGKT) serves as a coordination point for GTP. The segment at 496–500 (GITQH) is G2. The G3 stretch occupies residues 517–520 (DTPG). Residues 517–521 (DTPGH) and 571–574 (NKID) contribute to the GTP site. Residues 571-574 (NKID) form a G4 region. The tract at residues 607-609 (SAK) is G5.

It belongs to the TRAFAC class translation factor GTPase superfamily. Classic translation factor GTPase family. IF-2 subfamily.

Its subcellular location is the cytoplasm. Functionally, one of the essential components for the initiation of protein synthesis. Protects formylmethionyl-tRNA from spontaneous hydrolysis and promotes its binding to the 30S ribosomal subunits. Also involved in the hydrolysis of GTP during the formation of the 70S ribosomal complex. The protein is Translation initiation factor IF-2 of Neisseria meningitidis serogroup B (strain ATCC BAA-335 / MC58).